The primary structure comprises 252 residues: Diphthine synthase (252 aa).

Residues Leu9, Asp85, Val88, 113-114 (SI), Leu165, Ala202, and His227 contribute to the S-adenosyl-L-methionine site.

The protein belongs to the diphthine synthase family. As to quaternary structure, homodimer.

It catalyses the reaction 2-[(3S)-amino-3-carboxypropyl]-L-histidyl-[translation elongation factor 2] + 3 S-adenosyl-L-methionine = diphthine-[translation elongation factor 2] + 3 S-adenosyl-L-homocysteine + 3 H(+). The protein operates within protein modification; peptidyl-diphthamide biosynthesis. Its function is as follows. S-adenosyl-L-methionine-dependent methyltransferase that catalyzes the trimethylation of the amino group of the modified target histidine residue in translation elongation factor 2 (EF-2), to form an intermediate called diphthine. The three successive methylation reactions represent the second step of diphthamide biosynthesis. In Methanospirillum hungatei JF-1 (strain ATCC 27890 / DSM 864 / NBRC 100397 / JF-1), this protein is Diphthine synthase.